A 148-amino-acid polypeptide reads, in one-letter code: Ribonuclease H (148 aa).

The RNase H type-1 domain occupies 1 to 141; the sequence is MKTVEIYTDG…ADELANLGVK (141 aa). Mg(2+) contacts are provided by Asp-9, Glu-47, Asp-69, and Asp-133.

Belongs to the RNase H family. In terms of assembly, monomer. Mg(2+) is required as a cofactor.

Its subcellular location is the cytoplasm. It catalyses the reaction Endonucleolytic cleavage to 5'-phosphomonoester.. Its function is as follows. Endonuclease that specifically degrades the RNA of RNA-DNA hybrids. The protein is Ribonuclease H of Hahella chejuensis (strain KCTC 2396).